The sequence spans 619 residues: DNA mismatch repair protein MutL (619 aa).

The span at 364–375 (EPASAREPAAPR) shows a compositional bias: low complexity. The disordered stretch occupies residues 364-399 (EPASAREPAAPRYSTSSGATGGRQPAASWPHAQPGY).

It belongs to the DNA mismatch repair MutL/HexB family.

In terms of biological role, this protein is involved in the repair of mismatches in DNA. It is required for dam-dependent methyl-directed DNA mismatch repair. May act as a 'molecular matchmaker', a protein that promotes the formation of a stable complex between two or more DNA-binding proteins in an ATP-dependent manner without itself being part of a final effector complex. This chain is DNA mismatch repair protein MutL, found in Citrobacter koseri (strain ATCC BAA-895 / CDC 4225-83 / SGSC4696).